Consider the following 418-residue polypeptide: Serine hydroxymethyltransferase (418 aa).

Residues L121 and 125-127 contribute to the (6S)-5,6,7,8-tetrahydrofolate site; that span reads GHL. K230 carries the N6-(pyridoxal phosphate)lysine modification. 355 to 357 serves as a coordination point for (6S)-5,6,7,8-tetrahydrofolate; sequence SPF.

It belongs to the SHMT family. Homodimer. Pyridoxal 5'-phosphate serves as cofactor.

It localises to the cytoplasm. It carries out the reaction (6R)-5,10-methylene-5,6,7,8-tetrahydrofolate + glycine + H2O = (6S)-5,6,7,8-tetrahydrofolate + L-serine. The protein operates within one-carbon metabolism; tetrahydrofolate interconversion. It participates in amino-acid biosynthesis; glycine biosynthesis; glycine from L-serine: step 1/1. Its function is as follows. Catalyzes the reversible interconversion of serine and glycine with tetrahydrofolate (THF) serving as the one-carbon carrier. This reaction serves as the major source of one-carbon groups required for the biosynthesis of purines, thymidylate, methionine, and other important biomolecules. Also exhibits THF-independent aldolase activity toward beta-hydroxyamino acids, producing glycine and aldehydes, via a retro-aldol mechanism. The sequence is that of Serine hydroxymethyltransferase from Streptococcus agalactiae serotype V (strain ATCC BAA-611 / 2603 V/R).